The primary structure comprises 251 residues: Imidazole glycerol phosphate synthase subunit HisF (251 aa).

Active-site residues include D11 and D130.

This sequence belongs to the HisA/HisF family. As to quaternary structure, heterodimer of HisH and HisF.

The protein resides in the cytoplasm. The enzyme catalyses 5-[(5-phospho-1-deoxy-D-ribulos-1-ylimino)methylamino]-1-(5-phospho-beta-D-ribosyl)imidazole-4-carboxamide + L-glutamine = D-erythro-1-(imidazol-4-yl)glycerol 3-phosphate + 5-amino-1-(5-phospho-beta-D-ribosyl)imidazole-4-carboxamide + L-glutamate + H(+). It participates in amino-acid biosynthesis; L-histidine biosynthesis; L-histidine from 5-phospho-alpha-D-ribose 1-diphosphate: step 5/9. Functionally, IGPS catalyzes the conversion of PRFAR and glutamine to IGP, AICAR and glutamate. The HisF subunit catalyzes the cyclization activity that produces IGP and AICAR from PRFAR using the ammonia provided by the HisH subunit. The sequence is that of Imidazole glycerol phosphate synthase subunit HisF from Pelagibacter ubique (strain HTCC1062).